We begin with the raw amino-acid sequence, 483 residues long: Glutamyl-tRNA(Gln) amidotransferase subunit A (483 aa).

Residues K77 and S152 each act as charge relay system in the active site. S176 functions as the Acyl-ester intermediate in the catalytic mechanism.

This sequence belongs to the amidase family. GatA subfamily. In terms of assembly, heterotrimer of A, B and C subunits.

It carries out the reaction L-glutamyl-tRNA(Gln) + L-glutamine + ATP + H2O = L-glutaminyl-tRNA(Gln) + L-glutamate + ADP + phosphate + H(+). Its function is as follows. Allows the formation of correctly charged Gln-tRNA(Gln) through the transamidation of misacylated Glu-tRNA(Gln) in organisms which lack glutaminyl-tRNA synthetase. The reaction takes place in the presence of glutamine and ATP through an activated gamma-phospho-Glu-tRNA(Gln). The polypeptide is Glutamyl-tRNA(Gln) amidotransferase subunit A (Listeria monocytogenes serotype 4b (strain CLIP80459)).